Here is a 403-residue protein sequence, read N- to C-terminus: Palmitoyltransferase ZDHHC23-A (403 aa).

The Cytoplasmic portion of the chain corresponds to 1-70; that stretch reads MKRERFKPPE…ADRLGVSCCT (70 aa). A helical membrane pass occupies residues 71–91; the sequence is VGPLRLELSVLPPMVLIPGLL. Residue Arg-92 is a topological domain, lumenal. A helical transmembrane segment spans residues 93 to 113; the sequence is VAAINCLLGVIILTALPLLVL. Topologically, residues 114–125 are cytoplasmic; it reads WYYYMTHRRKRR. Residues 126–146 form a helical membrane-spanning segment; sequence TLFFLSLALFSLAYMYYLFLT. At 147–153 the chain is on the lumenal side; that stretch reads EIVPRGD. The chain crosses the membrane as a helical span at residues 154 to 174; it reads VTHLQVVTATTGMMLTLISLV. Over 175–268 the chain is Cytoplasmic; that stretch reads RTKQGPGFVK…NSCVGQANHR (94 aa). The region spanning 225 to 275 is the DHHC domain; the sequence is KKCPVCQLVRPPRAGHCRICGACVLRMDHHCVWINSCVGQANHRQFILTLL. The active-site S-palmitoyl cysteine intermediate is the Cys-255. Residues 269-289 traverse the membrane as a helical segment; it reads QFILTLLLFLLTSFYGISLVL. Over 290–319 the chain is Lumenal; it reads RSICPKQSLFTAMLYCPGVYNQYSTALCFT. Residues 320–340 traverse the membrane as a helical segment; that stretch reads CVWYSVIITGGLLHLFILQII. Residues 341 to 403 lie on the Cytoplasmic side of the membrane; that stretch reads NVSCNVTERE…GSSLNLTDMV (63 aa).

Belongs to the DHHC palmitoyltransferase family.

It is found in the golgi apparatus membrane. The protein localises to the golgi apparatus. The protein resides in the trans-Golgi network membrane. It catalyses the reaction L-cysteinyl-[protein] + hexadecanoyl-CoA = S-hexadecanoyl-L-cysteinyl-[protein] + CoA. Functionally, palmitoyltransferase that could catalyze the addition of palmitate onto various protein substrates and be involved in a variety of cellular processes. The polypeptide is Palmitoyltransferase ZDHHC23-A (zdhhc23a) (Danio rerio (Zebrafish)).